An 85-amino-acid chain; its full sequence is ATP synthase subunit 9, mitochondrial (85 aa).

2 consecutive transmembrane segments (helical) span residues Ile-19–Phe-39 and Ile-61–Ile-81.

Belongs to the ATPase C chain family. As to quaternary structure, F-type ATPases have 2 components, CF(1) - the catalytic core - and CF(0) - the membrane proton channel. CF(1) has five subunits: alpha(3), beta(3), gamma(1), delta(1), epsilon(1). CF(0) has three main subunits: a, b and c.

It localises to the mitochondrion membrane. In terms of biological role, this protein is one of the chains of the nonenzymatic membrane component (F0) of mitochondrial ATPase. This chain is ATP synthase subunit 9, mitochondrial (ATP9), found in Arabidopsis thaliana (Mouse-ear cress).